A 98-amino-acid polypeptide reads, in one-letter code: NADH-ubiquinone oxidoreductase chain 4L (98 aa).

3 helical membrane passes run 2–22 (PSIS…MLIF), 29–49 (SLLC…LTIL), and 61–81 (ILLL…LVTV).

The protein belongs to the complex I subunit 4L family. As to quaternary structure, core subunit of respiratory chain NADH dehydrogenase (Complex I) which is composed of 45 different subunits.

It localises to the mitochondrion inner membrane. The catalysed reaction is a ubiquinone + NADH + 5 H(+)(in) = a ubiquinol + NAD(+) + 4 H(+)(out). Its function is as follows. Core subunit of the mitochondrial membrane respiratory chain NADH dehydrogenase (Complex I) which catalyzes electron transfer from NADH through the respiratory chain, using ubiquinone as an electron acceptor. Part of the enzyme membrane arm which is embedded in the lipid bilayer and involved in proton translocation. The polypeptide is NADH-ubiquinone oxidoreductase chain 4L (MT-ND4L) (Eulemur mongoz (Mongoose lemur)).